We begin with the raw amino-acid sequence, 139 residues long: Desampylase (139 aa).

An MPN domain is found at 6 to 139 (LSLAADARDS…EFRELSVAVE (134 aa)). The Proton donor/acceptor role is filled by Glu31. The Zn(2+) site is built by His88, His90, and Asp101. A JAMM motif motif is present at residues 88-101 (HSHPESDPVPSATD).

Belongs to the peptidase M67B family. Monomer. It depends on Zn(2+) as a cofactor.

It catalyses the reaction an N(6)-[small archaeal modifier protein]-[protein]-L-lysine + H2O = a [protein]-L-lysine + a [small archaeal modifier protein].. With respect to regulation, inhibited by EDTA and N-ethylmaleimide (NEM) in vitro. In terms of biological role, metalloprotease that displays desampylase (DSAMP) activity, cleaving ubiquitin-like small archaeal modifier proteins (SAMP1, SAMP2 and SAMP3) from protein conjugates (isopeptide- and linear-linked). Thus, likely regulates sampylation and the pools of 'free' SAMP available for protein modification. Functions as a specific and not a general protease since it is unable to hydrolyze a variety of unmodified proteins otherwise hydrolyzed by proteinase K. The protein is Desampylase of Haloferax volcanii (strain ATCC 29605 / DSM 3757 / JCM 8879 / NBRC 14742 / NCIMB 2012 / VKM B-1768 / DS2) (Halobacterium volcanii).